Consider the following 100-residue polypeptide: Urease subunit gamma (100 aa).

It belongs to the urease gamma subunit family. Heterotrimer of UreA (gamma), UreB (beta) and UreC (alpha) subunits. Three heterotrimers associate to form the active enzyme.

It is found in the cytoplasm. The catalysed reaction is urea + 2 H2O + H(+) = hydrogencarbonate + 2 NH4(+). It functions in the pathway nitrogen metabolism; urea degradation; CO(2) and NH(3) from urea (urease route): step 1/1. The sequence is that of Urease subunit gamma from Cupriavidus metallidurans (strain ATCC 43123 / DSM 2839 / NBRC 102507 / CH34) (Ralstonia metallidurans).